The chain runs to 594 residues: UvrABC system protein C (594 aa).

A GIY-YIG domain is found at 14-91 (DQPGCYLMKD…IKKHDPKYNI (78 aa)). In terms of domain architecture, UVR spans 196–231 (KEVRSELETKMYEASEKLEFERAKELRDQIAHIDAI).

It belongs to the UvrC family. Interacts with UvrB in an incision complex.

The protein localises to the cytoplasm. Functionally, the UvrABC repair system catalyzes the recognition and processing of DNA lesions. UvrC both incises the 5' and 3' sides of the lesion. The N-terminal half is responsible for the 3' incision and the C-terminal half is responsible for the 5' incision. This chain is UvrABC system protein C, found in Bacillus cereus (strain AH187).